The sequence spans 236 residues: Sensory rhodopsin I (236 aa).

Helical transmembrane passes span 6 to 26 (VVYG…GFLY), 37 to 57 (ILAA…AMVF), 74 to 94 (YLDW…TAGA), 98 to 118 (AIFG…GAVV), 126 to 146 (ALFG…YLIF), 167 to 187 (VGLL…GLGF), and 192 to 212 (GVSI…VYFF). Lysine 205 is modified (N6-(retinylidene)lysine).

It belongs to the archaeal/bacterial/fungal opsin family. Interacts with Htr1. In terms of processing, the covalent binding of retinal to the apoprotein, bacterioopsin, generates bacteriorhodopsin.

It is found in the membrane. In terms of biological role, photoattractant rhodopsin. The protein is Sensory rhodopsin I (sop1) of Haloarcula marismortui (strain ATCC 43049 / DSM 3752 / JCM 8966 / VKM B-1809) (Halobacterium marismortui).